A 1193-amino-acid chain; its full sequence is Pyruvate carboxylase (1193 aa).

Residues 41–493 (QFQKILVANR…WTTFIDDTPE (453 aa)) form the Biotin carboxylation domain. The ATP site is built by Lys159, Glu243, and His278. An ATP-grasp domain is found at 163 to 360 (RQLAIRCNVP…IVAAQIQIAA (198 aa)). Arg335 is an active-site residue. Residues 579–847 (CLIMDTTWRD…DPGLNSAHVR (269 aa)) enclose the Pyruvate carboxyltransferase domain. Residues 587-591 (RDAHQ) and Arg660 contribute to the substrate site. Asp588 serves as a coordination point for a divalent metal cation. A divalent metal cation contacts are provided by Lys756, His786, and His788. The residue at position 756 (Lys756) is an N6-carboxylysine. Thr921 serves as a coordination point for substrate. The region spanning 1116 to 1191 (KADVGDSSQV…DGQDLVCKIT (76 aa)) is the Biotinyl-binding domain. N6-biotinyllysine is present on Lys1157.

It depends on biotin as a cofactor. Requires Zn(2+) as cofactor.

Its subcellular location is the cytoplasm. It catalyses the reaction hydrogencarbonate + pyruvate + ATP = oxaloacetate + ADP + phosphate + H(+). It participates in carbohydrate biosynthesis; gluconeogenesis. Pyruvate carboxylase catalyzes a 2-step reaction, involving the ATP-dependent carboxylation of the covalently attached biotin in the first step and the transfer of the carboxyl group to pyruvate in the second. The sequence is that of Pyruvate carboxylase (pyc) from Aspergillus terreus.